The chain runs to 396 residues: Metallophosphoesterase 1 (396 aa).

The chain crosses the membrane as a helical span at residues 27–47; the sequence is IAVVFAVLLFCEFLIYYLAIF. A divalent metal cation-binding residues include Asp-77, Asp-119, Asn-157, His-249, His-303, and His-305. The chain crosses the membrane as a helical span at residues 356-376; that stretch reads VVLVIYCGAVGFLVVLTLSHL. Residues 392–396 carry the Di-lysine motif motif; it reads KRKTR.

The protein belongs to the metallophosphoesterase superfamily. MPPE1 family. Interacts with GPI-anchor proteins (via the GPI portion). Interacts with TMED10. It depends on Mn(2+) as a cofactor.

It is found in the endoplasmic reticulum-Golgi intermediate compartment membrane. Its function is as follows. Metallophosphoesterase that catalyzes the removal of a side-chain ethanolamine-phosphate (EtNP) from the second mannose of the GPI-anchor protein intermediate. Participates in the glycan remodeling steps of GPI-anchor maturation to allow an efficient transport of GPI-anchor proteins from the endoplasmic reticulum to the Golgi. This is Metallophosphoesterase 1 from Macaca fascicularis (Crab-eating macaque).